A 95-amino-acid polypeptide reads, in one-letter code: Aspartyl/glutamyl-tRNA(Asn/Gln) amidotransferase subunit C (95 aa).

The protein belongs to the GatC family. Heterotrimer of A, B and C subunits.

The enzyme catalyses L-glutamyl-tRNA(Gln) + L-glutamine + ATP + H2O = L-glutaminyl-tRNA(Gln) + L-glutamate + ADP + phosphate + H(+). It carries out the reaction L-aspartyl-tRNA(Asn) + L-glutamine + ATP + H2O = L-asparaginyl-tRNA(Asn) + L-glutamate + ADP + phosphate + 2 H(+). Its function is as follows. Allows the formation of correctly charged Asn-tRNA(Asn) or Gln-tRNA(Gln) through the transamidation of misacylated Asp-tRNA(Asn) or Glu-tRNA(Gln) in organisms which lack either or both of asparaginyl-tRNA or glutaminyl-tRNA synthetases. The reaction takes place in the presence of glutamine and ATP through an activated phospho-Asp-tRNA(Asn) or phospho-Glu-tRNA(Gln). The protein is Aspartyl/glutamyl-tRNA(Asn/Gln) amidotransferase subunit C of Vesicomyosocius okutanii subsp. Calyptogena okutanii (strain HA).